The chain runs to 87 residues: UPF0213 protein SYNAS_10430 (87 aa).

The region spanning 2 to 78 (SKNYVYILEC…KKMSRAEKLQ (77 aa)) is the GIY-YIG domain.

This sequence belongs to the UPF0213 family.

This is UPF0213 protein SYNAS_10430 from Syntrophus aciditrophicus (strain SB).